A 643-amino-acid polypeptide reads, in one-letter code: Probable extracellular metalloproteinase 4 (643 aa).

Positions 1–18 are cleaved as a signal peptide; it reads MHGLLLAGLLALPLNVLA. Positions 19–254 are excised as a propeptide; sequence HPTESHSSGV…VHSVVDYVSA (236 aa). Basic and acidic residues predominate over residues 47 to 57; the sequence is TKSDAVPKQDG. Positions 47–69 are disordered; the sequence is TKSDAVPKQDGESFTTSSTGDDN. Polar residues predominate over residues 58–69; sequence ESFTTSSTGDDN. 2 N-linked (GlcNAc...) asparagine glycosylation sites follow: Asn271 and Asn420. Residue His437 participates in Zn(2+) binding. The active site involves Glu438. Residue His441 participates in Zn(2+) binding. Asn603 and Asn629 each carry an N-linked (GlcNAc...) asparagine glycan.

It belongs to the peptidase M36 family. It depends on Zn(2+) as a cofactor.

The protein resides in the secreted. In terms of biological role, secreted metalloproteinase probably acting as a virulence factor. This is Probable extracellular metalloproteinase 4 (MEP4) from Arthroderma benhamiae (strain ATCC MYA-4681 / CBS 112371) (Trichophyton mentagrophytes).